The chain runs to 436 residues: Glucose-1-phosphate adenylyltransferase (436 aa).

Alpha-D-glucose 1-phosphate contacts are provided by residues Tyr-112, Gly-178, 193-194 (EK), and Ser-211.

This sequence belongs to the bacterial/plant glucose-1-phosphate adenylyltransferase family. Homotetramer.

The enzyme catalyses alpha-D-glucose 1-phosphate + ATP + H(+) = ADP-alpha-D-glucose + diphosphate. The protein operates within glycan biosynthesis; glycogen biosynthesis. Involved in the biosynthesis of ADP-glucose, a building block required for the elongation reactions to produce glycogen. Catalyzes the reaction between ATP and alpha-D-glucose 1-phosphate (G1P) to produce pyrophosphate and ADP-Glc. The polypeptide is Glucose-1-phosphate adenylyltransferase (Histophilus somni (strain 129Pt) (Haemophilus somnus)).